Consider the following 1839-residue polypeptide: Adenylate cyclase (1839 aa).

Disordered stretches follow at residues 1-21 (MSSP…PQIE), 43-87 (ITTH…PRFS), 126-245 (TSLL…PIVS), 272-315 (KNTE…QWTA), 332-388 (KRKA…DSND), and 400-468 (ESSG…SFSK). A compositionally biased stretch (polar residues) spans 165-211 (SQSNESRGTRSSIFFPSTSNSRRGSATSTMTSGSRSSHPPDTPPITS). Residues 212 to 221 (QQQEQQYDQQ) show a composition bias toward low complexity. Residues 222–233 (RQQRPETREQEQ) are compositionally biased toward basic and acidic residues. Residues 332–355 (KRKAKHHHHYHHPQHPRPPHRKHY) show a composition bias toward basic residues. Over residues 361–376 (PIEDKAVVEKEQEPPE) the composition is skewed to basic and acidic residues. Over residues 407-428 (SASTQSVSSFSSGATGASGATG) the composition is skewed to low complexity. The 81-residue stretch at 494–574 (RRYAIRIFNI…LNGYLKSDPL (81 aa)) folds into the Ras-associating domain. LRR repeat units lie at residues 632–655 (TSDI…FIES), 659–679 (LSSL…VTDA), 681–702 (KLVS…IFKL), 704–726 (NLTI…SKLK), 727–748 (NLQL…INSC), 750–771 (NLLQ…INQL), 773–794 (KLAK…SQMK), 795–816 (NLRT…APNL), 817–834 (QNLF…DDLT), 835–856 (RLRT…GNYM), 858–879 (NMTS…LLSK), 882–903 (RLEK…INKL), 905–926 (RLIY…ISDL), 928–950 (SLKS…EDLE), 951–971 (LTSL…PAKF), 982–1004 (SLLF…VNTF), 1006–1027 (NLKT…KLQN), 1028–1048 (LTEL…AVQH), 1051–1073 (SLKV…SQLS), 1074–1096 (RLSV…HYDW), 1103–1124 (DLKY…LDPE), and 1135–1160 (LKQL…SVSI). The PPM-type phosphatase domain maps to 1173–1439 (RYGVADTLGQ…DNITILCVSL (267 aa)). One can recognise a Guanylate cyclase domain in the interval 1483–1620 (AIVFTDIKNS…PVVNKAARVS (138 aa)). Residues Asp-1488 and Asp-1531 each coordinate Mg(2+).

The protein belongs to the adenylyl cyclase class-3 family. Mg(2+) serves as cofactor.

The catalysed reaction is ATP = 3',5'-cyclic AMP + diphosphate. Plays essential roles in regulation of cellular metabolism by catalyzing the synthesis of a second messenger, cAMP. The chain is Adenylate cyclase (CYR1) from Lachancea kluyveri (Yeast).